The primary structure comprises 346 residues: D-alanine--D-alanine ligase (346 aa).

The 201-residue stretch at 125 to 325 (KRIWRSEGLP…YPALCLEVLR (201 aa)) folds into the ATP-grasp domain. An ATP-binding site is contributed by 151–206 (FAALGSPMIVKPDREGSTIGLTKVTQIEQCGAAYALAARHDAMVLCEQFVKGDEVT). Positions 278, 292, and 294 each coordinate Mg(2+).

It belongs to the D-alanine--D-alanine ligase family. Requires Mg(2+) as cofactor. The cofactor is Mn(2+).

The protein resides in the cytoplasm. The enzyme catalyses 2 D-alanine + ATP = D-alanyl-D-alanine + ADP + phosphate + H(+). It participates in cell wall biogenesis; peptidoglycan biosynthesis. Cell wall formation. This is D-alanine--D-alanine ligase from Albidiferax ferrireducens (strain ATCC BAA-621 / DSM 15236 / T118) (Rhodoferax ferrireducens).